Consider the following 137-residue polypeptide: Oleosin Ara h 11.0101 (137 aa).

A2 is subject to N-acetylalanine; alternate. 2 helical membrane passes run 27 to 47 (AVVAGGSLLILAGLVLAGTVI) and 55 to 75 (LFVIFSPVLVPAVITVALLGL).

Belongs to the oleosin family. In terms of tissue distribution, expressed in seeds (at protein level).

It is found in the lipid droplet. It localises to the membrane. Functionally, may have a structural role to stabilize the lipid body during desiccation of the seed by preventing coalescence of the oil. Probably interacts with both lipid and phospholipid moieties of lipid bodies. May also provide recognition signals for specific lipase anchorage in lipolysis during seedling growth. In Arachis hypogaea (Peanut), this protein is Oleosin Ara h 11.0101.